A 525-amino-acid polypeptide reads, in one-letter code: Histidine-rich glycoprotein (525 aa).

A signal peptide spans 1–18 (MKVLTTALLLVTLQCSHA). Positions 19–122 (LSPTNCDASE…ESQDLSVNGY (104 aa)) constitute a Cystatin 1 domain. 5 disulfides stabilise this stretch: Cys-24–Cys-504, Cys-78–Cys-89, Cys-103–Cys-124, Cys-201–Cys-414, and Cys-216–Cys-239. Residues 41-84 (GRRSGYVFELLRVSDAHLDRAGTATVYYLALDVIESDCWVLSTK) form an interaction with ATP5F1A region. Asn-112, Asn-123, and Asn-200 each carry an N-linked (GlcNAc...) asparagine glycan. The Cystatin 2 domain occupies 135 to 240 (NTKDSPVLLD…TPDSIDINCE (106 aa)). The interval 273–447 (GSRDHHHTHK…SRKRGPGKGL (175 aa)) is disordered. Basic and acidic residues predominate over residues 293-303 (EGKDNSDRPRL). N-linked (GlcNAc...) asparagine glycosylation is found at Asn-322 and Asn-330. Basic residues predominate over residues 339–404 (HGHRPHGHHP…GHHPHGHHPH (66 aa)). The interval 345–379 (GHHPHSHHPPGHHSHGHHPHGHHPHSHHSHGHHPP) is necessary for endothelial cell focal adhesions and anti-angiogenic activities. Ser-438 carries the post-translational modification Phosphoserine.

Interacts with THBS1 (via the TSP type I repeats); the interaction blocks the antiangiogenic effect of THBS1 with CD36. Interacts with HPSE; the interaction is enhanced at acidic pH, partially inhibits binding of HPSE to cell surface receptors and modulates its enzymatic activity. Interacts (via the HRR domain) with TMP1; the interaction partially mediates the antiangiogenic properties of HRG. Interacts with kappa and lambda light chains of IgG molecules. Interacts with ATP5F1A; the interaction occurs on the surface of T-cells and alters their cell morphology in concert with CONA. Binds IgG molecules containing kappa and lambda light chains and inhibits the formation of insoluble immunoglobulin complexes. Interacts with F12; the interaction, which is enhanced in the presence of zinc ions and inhibited by heparin-binding to HRG, inhibits factor XII autoactivation and contact-initiated coagulation. Interacts with PLG (via its Kringle domains); the interaction tethers PLG to the cell surface and enhances its activation. Interacts (via the HRR domain) with TPM1; the interaction appears to contribute to the antiangiogenic properties of the HRR domain. Interacts with THBS2; the interaction blocks the antiangiogenic effect of THBS2 with CD36. Zn(2+) is required as a cofactor. Post-translationally, proteolytic cleavage produces several HRG fragments which are mostly disulfide-linked and, therefore, not released. Cleavage by plasmin is inhibited in the presence of heparin, zinc ions or in an acidic environment. Cleavage reduces binding of HRG to heparan sulfate, but enhances the ability of HRG to bind and tether plasminogen to the cell surface. On platelet activation, releases a 33 kDa antiangiogenic peptide which encompasses the HRR. Also cleaved in the C-terminal by plasmin. In terms of processing, N-glycosylated. As to expression, expressed in liver, blood plasma, serum and in platelets. Also present in fibrin clots, wound fluid from acute wounds and chronic leg ulcers.

The protein localises to the secreted. Functionally, plasma glycoprotein that binds a number of ligands such as heme, heparin, heparan sulfate, thrombospondin, plasminogen, and divalent metal ions. Binds heparin and heparin/glycosaminoglycans in a zinc-dependent manner. Binds heparan sulfate on the surface of liver, lung, kidney and heart endothelial cells. Binds to N-sulfated polysaccharide chains on the surface of liver endothelial cells. Inhibits rosette formation. Acts as an adapter protein and is implicated in regulating many processes such as immune complex and pathogen clearance, cell chemotaxis, cell adhesion, angiogenesis, coagulation and fibrinolysis. Mediates clearance of necrotic cells through enhancing the phagocytosis of necrotic cells in a heparan sulfate-dependent pathway. This process can be regulated by the presence of certain HRG ligands such as heparin and zinc ions. Binds to IgG subclasses of immunoglobins containing kappa and lambda light chains with different affinities regulating their clearance and inhibiting the formation of insoluble immune complexes. Tethers plasminogen to the cell surface. Binds T-cells and alters the cell morphology. Acts as a regulator of the vascular endothelial growth factor (VEGF) signaling pathway; inhibits endothelial cell motility by reducing VEGF-induced complex formation between PXN/paxillin and ILK/integrin-linked protein kinase and by promoting inhibition of VEGF-induced tyrosine phosphorylation of focal adhesion kinases and alpha-actinins in endothelial cells. Also plays a role in the regulation of tumor angiogenesis and tumor immune surveillance. Normalizes tumor vessels and promotes antitumor immunity by polarizing tumor-associated macrophages, leading to decreased tumor growth and metastasis. Modulates angiogenesis by blocking the CD6-mediated antiangiongenic effect of thrombospondins, THBS1 and THBS2. The protein is Histidine-rich glycoprotein (Hrg) of Mus musculus (Mouse).